The primary structure comprises 447 residues: UDP-glycosyltransferase 76B1 (447 aa).

Residues S269, 327–328 (WA), 345–353 (HCGWNSTLE), and 367–370 (FGDQ) each bind UDP-alpha-D-glucose.

This sequence belongs to the UDP-glycosyltransferase family. In terms of tissue distribution, expressed in roots, leaves, hydathodes, sepals and style.

Functionally, glycosylates the amino acid-related molecules isoleucic acid (2-hydroxy-3-methylpentanoic acid) and valic acid (2-hydroxy-3-methylbutyric acid). Acts as a negative regulator of salicylic acid (SA)-dependent plant defense in the absence of pathogens and promotes the jasmonate (JA) response. Negatively influences the onset of senescence. This Arabidopsis thaliana (Mouse-ear cress) protein is UDP-glycosyltransferase 76B1.